We begin with the raw amino-acid sequence, 385 residues long: GDSL esterase/lipase 5 (385 aa).

The signal sequence occupies residues 1-35 (MRESTLMEKVTRRTISSFIFFIVSSTILFLAGKSS). Residue Asn-45 is glycosylated (N-linked (GlcNAc...) asparagine). The active-site Nucleophile is Ser-55. N-linked (GlcNAc...) asparagine glycosylation is found at Asn-66, Asn-194, Asn-211, and Asn-289. Residues Asp-345 and His-348 contribute to the active site.

This sequence belongs to the 'GDSL' lipolytic enzyme family.

It is found in the secreted. This Arabidopsis thaliana (Mouse-ear cress) protein is GDSL esterase/lipase 5 (GLIP5).